A 407-amino-acid chain; its full sequence is Accessory Sec system protein translocase subunit SecY2 (407 aa).

The next 10 helical transmembrane spans lie at 13 to 33 (FLWT…TLPF), 65 to 85 (FFSI…MFTV), 104 to 124 (MLLT…NLPL), 133 to 153 (GTIV…LIWL), 158 to 178 (SSMG…SYIP), 192 to 212 (PLIL…AVLV), 248 to 268 (IMYA…LLFF), 287 to 307 (IPWF…FAFI), 345 to 365 (FAFV…LLIF), and 370 to 390 (YMRL…VFSI).

This sequence belongs to the SecY/SEC61-alpha family. SecY2 subfamily. May form heterotrimers with SecE and SecG subunits (Potential). Component of the accessory SecA2/SecY2 protein translocase complex required to export cell wall protein GspB.

Its subcellular location is the cell membrane. Functionally, the central subunit of a protein translocation channel (Potential). Part of the accessory SecA2/SecY2 system specifically required to export GspB, a serine-rich repeat cell wall protein encoded upstream in the same operon. The chain is Accessory Sec system protein translocase subunit SecY2 from Streptococcus gordonii.